The following is a 525-amino-acid chain: Light-independent protochlorophyllide reductase subunit B (525 aa).

A [4Fe-4S] cluster-binding site is contributed by Asp36. Asp286 acts as the Proton donor in catalysis. 421–422 (GL) lines the substrate pocket.

This sequence belongs to the ChlB/BchB/BchZ family. Protochlorophyllide reductase is composed of three subunits; ChlL, ChlN and ChlB. Forms a heterotetramer of two ChlB and two ChlN subunits. The cofactor is [4Fe-4S] cluster.

The enzyme catalyses chlorophyllide a + oxidized 2[4Fe-4S]-[ferredoxin] + 2 ADP + 2 phosphate = protochlorophyllide a + reduced 2[4Fe-4S]-[ferredoxin] + 2 ATP + 2 H2O. It participates in porphyrin-containing compound metabolism; chlorophyll biosynthesis (light-independent). Its function is as follows. Component of the dark-operative protochlorophyllide reductase (DPOR) that uses Mg-ATP and reduced ferredoxin to reduce ring D of protochlorophyllide (Pchlide) to form chlorophyllide a (Chlide). This reaction is light-independent. The NB-protein (ChlN-ChlB) is the catalytic component of the complex. The polypeptide is Light-independent protochlorophyllide reductase subunit B (Prochlorococcus marinus (strain NATL2A)).